Here is a 590-residue protein sequence, read N- to C-terminus: MIKFQERVTFKDVAVVFTKEELALLDKAQINLYQDVMLENFRNLMLVRDGIKNNILNLQAKGLSYLSQEVLHCWQIWKQRIRDLTVSQDYIVNLQEECSPHLEDVSLSEEWAGISLQISENENYVVNAIIKNQDITAWQSLTQVLTPESWRKANIMTEPQNSQGRYKGIYMEEKLYRRAQHDDSLSWTSCDHHESQECKGEDPGRHPSCGKNLGMKSTVEKRNAAHVLPQPFPCNNCGVAFADDTDPHVHHSTHLGEKSYKCDQYGKNFSQSQDLIVHCKTHSGKTPYEFHEWPMGCKQSSDLPRYQKVSSGDKPYKCKECGKGFRRSSSLHNHHRVHTGEMPYKCDECGKGFGFRSLLCIHQGVHTGKKPYKCEECGKGFDQSSNLLVHQRVHTGEKPYKCSECGKCFSSSSVLQVHWRFHTGEKPYRCGECGKGFSQCTHLHIHQRVHTGEKPYKCNVCGKDFAYSSVLHTHQRVHTGEKPYKCEVCGKCFSYSSYFHLHQRDHIREKPYKCDECGKGFSRNSDLNVHLRVHTGERPYKCKACGKGFSRNSYLLAHQRVHIDETQYTHCERGKDLLTHQRLHEQRETL.

Positions 8–86 (VTFKDVAVVF…WKQRIRDLTV (79 aa)) constitute a KRAB domain. Residues 232-254 (FPCNNCGVAFADDTDPHVHHSTH) form a C2H2-type 1 zinc finger. A C2H2-type 2; degenerate zinc finger spans residues 260 to 282 (YKCDQYGKNFSQSQDLIVHCKTH). C2H2-type zinc fingers lie at residues 316-338 (YKCK…HRVH), 344-366 (YKCD…QGVH), 372-394 (YKCE…QRVH), 400-422 (YKCS…WRFH), 428-450 (YRCG…QRVH), 456-478 (YKCN…QRVH), 484-506 (YKCE…QRDH), 512-534 (YKCD…LRVH), and 540-562 (YKCK…QRVH).

This sequence belongs to the krueppel C2H2-type zinc-finger protein family.

The protein resides in the nucleus. May be involved in transcriptional regulation. In Homo sapiens (Human), this protein is Zinc finger protein 285 (ZNF285).